A 130-amino-acid chain; its full sequence is Histone H2A type 1 (130 aa).

Residues 1 to 22 (MSGRGKQGGKTRAKAKTRSSRA) are disordered. An N-acetylserine modification is found at Ser-2. Phosphoserine is present on Ser-2. Position 6 is an N6-(2-hydroxyisobutyryl)lysine (Lys-6). An N6-acetyllysine modification is found at Lys-6. Basic residues predominate over residues 7-19 (QGGKTRAKAKTRS). Residue Lys-10 is modified to N6-(2-hydroxyisobutyryl)lysine; alternate. Residue Lys-10 is modified to N6-lactoyllysine; alternate. At Lys-10 the chain carries N6-succinyllysine. Glycyl lysine isopeptide (Lys-Gly) (interchain with G-Cter in ubiquitin) cross-links involve residues Lys-14 and Lys-16. At Lys-37 the chain carries N6-(2-hydroxyisobutyryl)lysine; alternate. N6-(2-hydroxyisobutyryl)lysine occurs at positions 75 and 76. At Lys-96 the chain carries N6-(2-hydroxyisobutyryl)lysine; alternate. The residue at position 96 (Lys-96) is an N6-succinyllysine. An N6-glutaryllysine; alternate modification is found at Lys-96. Gln-105 is subject to N5-methylglutamine. Lys-119 is subject to N6-(2-hydroxyisobutyryl)lysine; alternate. Lys-119 is modified (N6-glutaryllysine; alternate). Residue Lys-120 forms a Glycyl lysine isopeptide (Lys-Gly) (interchain with G-Cter in ubiquitin) linkage.

The protein belongs to the histone H2A family. As to quaternary structure, the nucleosome is a histone octamer containing two molecules each of H2A, H2B, H3 and H4 assembled in one H3-H4 heterotetramer and two H2A-H2B heterodimers. The octamer wraps approximately 147 bp of DNA. Monoubiquitination of Lys-120 (H2AK119Ub) gives a specific tag for epigenetic transcriptional repression. Following DNA double-strand breaks (DSBs), it is ubiquitinated through 'Lys-63' linkage of ubiquitin moieties, leading to the recruitment of repair proteins to sites of DNA damage. H2AK119Ub and ionizing radiation-induced 'Lys-63'-linked ubiquitination are distinct events. Post-translationally, phosphorylation on Ser-2 is enhanced during mitosis. Phosphorylation on Ser-2 directly represses transcription. In terms of processing, glutamine methylation at Gln-105 (H2AQ104me) by FBL is specifically dedicated to polymerase I. It is present at 35S ribosomal DNA locus and impairs binding of the FACT complex.

The protein localises to the nucleus. It is found in the chromosome. Core component of nucleosome. Nucleosomes wrap and compact DNA into chromatin, limiting DNA accessibility to the cellular machineries which require DNA as a template. Histones thereby play a central role in transcription regulation, DNA repair, DNA replication and chromosomal stability. DNA accessibility is regulated via a complex set of post-translational modifications of histones, also called histone code, and nucleosome remodeling. This is Histone H2A type 1 from Xenopus laevis (African clawed frog).